Here is a 224-residue protein sequence, read N- to C-terminus: Pro-thyrotropin-releasing hormone-B (224 aa).

Positions 1–15 are cleaved as a signal peptide; that stretch reads MMFLWWLLLLGTAIS. Position 75 is a pyrrolidone carboxylic acid (Gln75). Residue Pro77 is modified to Proline amide. Over residues 86-101 the composition is skewed to basic and acidic residues; sequence EKRQHPGKRDLEDLQL. Disordered stretches follow at residues 86–131 and 150–212; these read EKRQ…DWSR and RQHP…NSGN. Gln89 bears the Pyrrolidone carboxylic acid mark. At Pro91 the chain carries Proline amide. Gln105 is subject to Pyrrolidone carboxylic acid. Pro107 carries the proline amide modification. Basic and acidic residues predominate over residues 110-129; the sequence is RYLEDMEKRQHPGKREEGDW. Gln119 carries the post-translational modification Pyrrolidone carboxylic acid. Residue Pro121 is modified to Proline amide. Gln151 bears the Pyrrolidone carboxylic acid mark. Pro153 bears the Proline amide mark. A Pyrrolidone carboxylic acid modification is found at Gln166. Pro168 is subject to Proline amide. Residues 182 to 199 are compositionally biased toward basic and acidic residues; it reads ENSKEVGKRQHPGKRYDP. Gln191 bears the Pyrrolidone carboxylic acid mark. Residue Pro193 is modified to Proline amide.

The protein belongs to the TRH family.

It localises to the secreted. This Xenopus laevis (African clawed frog) protein is Pro-thyrotropin-releasing hormone-B (trh-b).